Here is a 491-residue protein sequence, read N- to C-terminus: Ketol-acid reductoisomerase (NADP(+)) (491 aa).

The region spanning 15 to 208 (AQLGKCRFMA…GGHRAGVLES (194 aa)) is the KARI N-terminal Rossmann domain. NADP(+) contacts are provided by residues 45-48 (CGAQ), Arg-68, Arg-76, Ser-78, and 108-110 (DKQ). His-132 is an active-site residue. Gly-158 serves as a coordination point for NADP(+). KARI C-terminal knotted domains are found at residues 209-344 (SFVA…NAPQ) and 345-484 (FEGK…MTDM). Residues Asp-217, Glu-221, Glu-389, and Glu-393 each contribute to the Mg(2+) site. Ser-414 is a substrate binding site.

The protein belongs to the ketol-acid reductoisomerase family. Requires Mg(2+) as cofactor.

The enzyme catalyses (2R)-2,3-dihydroxy-3-methylbutanoate + NADP(+) = (2S)-2-acetolactate + NADPH + H(+). The catalysed reaction is (2R,3R)-2,3-dihydroxy-3-methylpentanoate + NADP(+) = (S)-2-ethyl-2-hydroxy-3-oxobutanoate + NADPH + H(+). It functions in the pathway amino-acid biosynthesis; L-isoleucine biosynthesis; L-isoleucine from 2-oxobutanoate: step 2/4. It participates in amino-acid biosynthesis; L-valine biosynthesis; L-valine from pyruvate: step 2/4. Functionally, involved in the biosynthesis of branched-chain amino acids (BCAA). Catalyzes an alkyl-migration followed by a ketol-acid reduction of (S)-2-acetolactate (S2AL) to yield (R)-2,3-dihydroxy-isovalerate. In the isomerase reaction, S2AL is rearranged via a Mg-dependent methyl migration to produce 3-hydroxy-3-methyl-2-ketobutyrate (HMKB). In the reductase reaction, this 2-ketoacid undergoes a metal-dependent reduction by NADPH to yield (R)-2,3-dihydroxy-isovalerate. The polypeptide is Ketol-acid reductoisomerase (NADP(+)) (Serratia proteamaculans (strain 568)).